Consider the following 206-residue polypeptide: Large ribosomal subunit protein uL4 (206 aa).

A disordered region spans residues 47–76; sequence GTQSAKTRAEVSGGGIKPWRQKGTGRARQG.

This sequence belongs to the universal ribosomal protein uL4 family. Part of the 50S ribosomal subunit.

Its function is as follows. One of the primary rRNA binding proteins, this protein initially binds near the 5'-end of the 23S rRNA. It is important during the early stages of 50S assembly. It makes multiple contacts with different domains of the 23S rRNA in the assembled 50S subunit and ribosome. Functionally, forms part of the polypeptide exit tunnel. The protein is Large ribosomal subunit protein uL4 of Clostridium botulinum (strain Okra / Type B1).